A 463-amino-acid polypeptide reads, in one-letter code: D(5)-like dopamine receptor (463 aa).

At 1-39 the chain is on the extracellular side; sequence MENFYNETEPTEPRGGVDPLRVVTAAEDVPAPVGGVSVR. Asn6 is a glycosylation site (N-linked (GlcNAc...) asparagine). The helical transmembrane segment at 40–65 threads the bilayer; the sequence is ALTGCVLCALIVSTLLGNTLVCAAVI. Residues 66–76 lie on the Cytoplasmic side of the membrane; that stretch reads KFRHLRSKVTN. The chain crosses the membrane as a helical span at residues 77–103; sequence AFVVSLAVSDLFVAVLVMPWRAVSEVA. Residues 104–112 lie on the Extracellular side of the membrane; the sequence is GVWLFGRFC. A disulfide bridge connects residues Cys112 and Cys194. Residues 113-135 form a helical membrane-spanning segment; it reads DTWVAFDIMCSTASILNLCVISM. Residues 136-154 lie on the Cytoplasmic side of the membrane; sequence DRYWAISNPFRYERRMTRR. The helical transmembrane segment at 155–180 threads the bilayer; sequence FAFLMIAVAWTLSVLISFIPVQLNWH. Over 181-198 the chain is Extracellular; it reads RADNNSSAHEQGDCNASL. Residues 199 to 223 form a helical membrane-spanning segment; the sequence is NRTYAISSSLISFYIPVLIMVGTYT. The Cytoplasmic portion of the chain corresponds to 224 to 273; that stretch reads RIFRIAQTQIRRISSLERAAGQRAQNQSHRASTHDESALKTSFKRETKVL. A helical transmembrane segment spans residues 274-301; the sequence is KTLSVIMGVFVFCWLPFFVLNCVVPFCD. Topologically, residues 302 to 315 are extracellular; that stretch reads VDKVGEPPCVSDTT. A helical transmembrane segment spans residues 316–337; that stretch reads FNIFVWFGWANSSLNPVIYAFN. Topologically, residues 338–463 are cytoplasmic; that stretch reads ADFRKAFTTI…PGQIQDLGDL (126 aa).

It belongs to the G-protein coupled receptor 1 family.

It is found in the cell membrane. Receptor for dopamine. The chain is D(5)-like dopamine receptor (dl) from Takifugu rubripes (Japanese pufferfish).